Reading from the N-terminus, the 185-residue chain is Threonylcarbamoyl-AMP synthase (185 aa).

Positions 4–185 constitute a YrdC-like domain; it reads SWRVQQAARE…LATGNIVRPA (182 aa).

Belongs to the SUA5 family. TsaC subfamily.

The protein resides in the cytoplasm. It catalyses the reaction L-threonine + hydrogencarbonate + ATP = L-threonylcarbamoyladenylate + diphosphate + H2O. In terms of biological role, required for the formation of a threonylcarbamoyl group on adenosine at position 37 (t(6)A37) in tRNAs that read codons beginning with adenine. Catalyzes the conversion of L-threonine, HCO(3)(-)/CO(2) and ATP to give threonylcarbamoyl-AMP (TC-AMP) as the acyladenylate intermediate, with the release of diphosphate. The polypeptide is Threonylcarbamoyl-AMP synthase (Pseudomonas fluorescens (strain Pf0-1)).